The following is a 361-amino-acid chain: Peptide chain release factor 1 (361 aa).

The residue at position 236 (Q236) is an N5-methylglutamine. Residues 285–309 (TAKDSARAADRKAQVGSGDRSERIR) show a composition bias toward basic and acidic residues. Residues 285 to 311 (TAKDSARAADRKAQVGSGDRSERIRTY) are disordered.

It belongs to the prokaryotic/mitochondrial release factor family. Post-translationally, methylated by PrmC. Methylation increases the termination efficiency of RF1.

It localises to the cytoplasm. In terms of biological role, peptide chain release factor 1 directs the termination of translation in response to the peptide chain termination codons UAG and UAA. The chain is Peptide chain release factor 1 from Methylorubrum extorquens (strain CM4 / NCIMB 13688) (Methylobacterium extorquens).